The primary structure comprises 258 residues: Insulin-like growth factor-binding protein 4 (258 aa).

The N-terminal stretch at 1 to 21 (MLSLCLMAALLLAAGPGPSLG) is a signal peptide. The 81-residue stretch at 23 to 103 (EAIHCPPCSE…VHGQGVCMEL (81 aa)) folds into the IGFBP N-terminal domain. Disulfide bonds link Cys27–Cys53, Cys30–Cys55, Cys38–Cys56, Cys44–Cys59, Cys67–Cys80, and Cys74–Cys100. An N-linked (GlcNAc...) asparagine glycan is attached at Asn125. Disulfide bonds link Cys131-Cys138, Cys174-Cys204, Cys215-Cys226, and Cys228-Cys249. The Thyroglobulin type-1 domain maps to 171 to 249 (QGSCQSELHR…GLEPKGELDC (79 aa)). Position 255 is a phosphoserine (Ser255).

Binds IGF2 more than IGF1.

The protein resides in the secreted. Its function is as follows. IGF-binding proteins prolong the half-life of the IGFs and have been shown to either inhibit or stimulate the growth promoting effects of the IGFs on cell culture. They alter the interaction of IGFs with their cell surface receptors. This chain is Insulin-like growth factor-binding protein 4 (IGFBP4), found in Bos taurus (Bovine).